The sequence spans 632 residues: Glycerophosphodiester phosphodiesterase domain-containing protein 4 (632 aa).

Residues 1-64 (MEETQDSSSS…GSCCCSRKEQ (64 aa)) are Cytoplasmic-facing. A helical membrane pass occupies residues 65 to 85 (FFYMCLVIAFILSVLFLFVWV). The Extracellular segment spans residues 86 to 114 (ETSNEYNGFDWVVYLGTGCWFFWSILVLS). Residues 115-135 (AAGIMVAYTTLLLLLGFLLLW) form a helical membrane-spanning segment. The Cytoplasmic segment spans residues 136-147 (ERIELNLHTSHK). The chain crosses the membrane as a helical span at residues 148–168 (VFICLVIVLCSFLLAVLSHFW). At 169–180 (KDKWLIAGLSLQ) the chain is on the extracellular side. A helical membrane pass occupies residues 181-201 (IFAPFVHLSLITVMIIISWPL). Residues 202 to 240 (SICVARLESEVKVRRYRMADYEQEIQERCNVFQRLRALQ) lie on the Cytoplasmic side of the membrane. The chain crosses the membrane as a helical span at residues 241–261 (IAAGLSFLIILLCLYLMPLGI). The Extracellular segment spans residues 262 to 542 (YSPCILKKEN…SRPLFFMTPG (281 aa)). In terms of domain architecture, GP-PDE spans 276–533 (PTLFGHRGAP…DNIELLNQLS (258 aa)). Residues Glu-308, Asp-310, and His-323 each contribute to the a divalent metal cation site. N-linked (GlcNAc...) asparagine glycosylation is found at Asn-343, Asn-349, Asn-384, and Asn-473. The helical transmembrane segment at 543-563 (FYMFMWLFLDIASAVIIGFVF) threads the bilayer. The Cytoplasmic segment spans residues 564–632 (CYNWIKEIKR…QKTEPKTENL (69 aa)). The tract at residues 596-632 (ENNDASQQKPEVAPTSANLAPENMIELQKTEPKTENL) is disordered. The span at 623 to 632 (QKTEPKTENL) shows a compositional bias: basic and acidic residues.

Belongs to the glycerophosphoryl diester phosphodiesterase family. In terms of tissue distribution, detected in testis, in particular in spermatocytes.

It is found in the cytoplasm. The protein resides in the membrane. This is Glycerophosphodiester phosphodiesterase domain-containing protein 4 (Gdpd4) from Mus musculus (Mouse).